Consider the following 276-residue polypeptide: MALKHFNPVTPSLRGTVLIDRKELWKGKPVKGLTEGKNKSGGRNNHGRTTSRFIGGGHKQSYRYVDFKRRKFDVVGTVERLEYDPNRTAFIALVKYEDGELAYILAPQRLKAGDQVVAGARVDIKPGNAMPLSAIPVGTIVHNIELKQGAGGKMARSAGTYAQLVGKDSGYAQIKLQSGELRVVRGECMATIGAVSNPDNMNQHMGKAGRSRWLGRRPHNRGVVMNPVDHPHGGGEGRTSGGRHPVTPWGKPTKGYKTRVNKRTDSLIIRRRKTGK.

Disordered stretches follow at residues 30-52 and 224-257; these read VKGLTEGKNKSGGRNNHGRTTSR and VMNPVDHPHGGGEGRTSGGRHPVTPWGKPTKGYK. Positions 41–52 are enriched in polar residues; that stretch reads GGRNNHGRTTSR.

The protein belongs to the universal ribosomal protein uL2 family. In terms of assembly, part of the 50S ribosomal subunit. Forms a bridge to the 30S subunit in the 70S ribosome.

In terms of biological role, one of the primary rRNA binding proteins. Required for association of the 30S and 50S subunits to form the 70S ribosome, for tRNA binding and peptide bond formation. It has been suggested to have peptidyltransferase activity; this is somewhat controversial. Makes several contacts with the 16S rRNA in the 70S ribosome. The chain is Large ribosomal subunit protein uL2 from Gluconacetobacter diazotrophicus (strain ATCC 49037 / DSM 5601 / CCUG 37298 / CIP 103539 / LMG 7603 / PAl5).